We begin with the raw amino-acid sequence, 600 residues long: Prostaglandin G/H synthase 1 (600 aa).

Residues 1–24 (MSRQGISLRFPLLLLLLSPSPVLP) form the signal peptide. Residues 32-70 (PVNPCCYYPCQHQGICVRFGLDRYQCDCTRTGYYGPNCT) form the EGF-like domain. 4 cysteine pairs are disulfide-bonded: C36-C47, C37-C159, C41-C57, and C59-C69. Residues N68, N104, and N144 are each glycosylated (N-linked (GlcNAc...) asparagine). H207 serves as the catalytic Proton acceptor. Y385 acts as the For cyclooxygenase activity in catalysis. H388 contacts heme b. A glycan (N-linked (GlcNAc...) asparagine) is linked at N410. C569 and C575 are joined by a disulfide.

It belongs to the prostaglandin G/H synthase family. In terms of assembly, homodimer. Heme b is required as a cofactor.

Its subcellular location is the microsome membrane. The protein localises to the endoplasmic reticulum membrane. The catalysed reaction is (5Z,8Z,11Z,14Z)-eicosatetraenoate + AH2 + 2 O2 = prostaglandin H2 + A + H2O. It carries out the reaction (5Z,8Z,11Z,14Z)-eicosatetraenoate + 2 O2 = prostaglandin G2. It catalyses the reaction prostaglandin G2 + AH2 = prostaglandin H2 + A + H2O. The enzyme catalyses (9Z,12Z)-octadecadienoate + AH2 + O2 = (9R)-hydroxy-(10E,12Z)-octadecadienoate + A + H2O. The catalysed reaction is (9Z,12Z)-octadecadienoate + AH2 + O2 = (9S)-hydroxy-(10E,12Z)-octadecadienoate + A + H2O. It carries out the reaction (9Z,12Z)-octadecadienoate + AH2 + O2 = (13S)-hydroxy-(9Z,11E)-octadecadienoate + A + H2O. It catalyses the reaction (9Z,12Z)-octadecadienoate + AH2 + O2 = (13R)-hydroxy-(9Z,11E)-octadecadienoate + A + H2O. It functions in the pathway lipid metabolism; prostaglandin biosynthesis. Its activity is regulated as follows. The cyclooxygenase activity is inhibited by nonsteroidal anti-inflammatory drugs (NSAIDs) including ibuprofen, flurbiprofen, ketoprofen, naproxen, flurbiprofen, anirolac, fenclofenac and diclofenac. Functionally, dual cyclooxygenase and peroxidase that plays an important role in the biosynthesis pathway of prostanoids, a class of C20 oxylipins mainly derived from arachidonate ((5Z,8Z,11Z,14Z)-eicosatetraenoate, AA, C20:4(n-6)), with a particular role in the inflammatory response. The cyclooxygenase activity oxygenates AA to the hydroperoxy endoperoxide prostaglandin G2 (PGG2), and the peroxidase activity reduces PGG2 to the hydroxy endoperoxide prostaglandin H2 (PGH2), the precursor of all 2-series prostaglandins and thromboxanes. This complex transformation is initiated by abstraction of hydrogen at carbon 13 (with S-stereochemistry), followed by insertion of molecular O2 to form the endoperoxide bridge between carbon 9 and 11 that defines prostaglandins. The insertion of a second molecule of O2 (bis-oxygenase activity) yields a hydroperoxy group in PGG2 that is then reduced to PGH2 by two electrons. Involved in the constitutive production of prostanoids in particular in the stomach and platelets. In gastric epithelial cells, it is a key step in the generation of prostaglandins, such as prostaglandin E2 (PGE2), which plays an important role in cytoprotection. In platelets, it is involved in the generation of thromboxane A2 (TXA2), which promotes platelet activation and aggregation, vasoconstriction and proliferation of vascular smooth muscle cells. Can also use linoleate (LA, (9Z,12Z)-octadecadienoate, C18:2(n-6)) as substrate and produce hydroxyoctadecadienoates (HODEs) in a regio- and stereospecific manner, being (9R)-HODE ((9R)-hydroxy-(10E,12Z)-octadecadienoate) and (13S)-HODE ((13S)-hydroxy-(9Z,11E)-octadecadienoate) its major products. The protein is Prostaglandin G/H synthase 1 (PTGS1) of Bos taurus (Bovine).